Consider the following 355-residue polypeptide: Protein ECERIFERUM 16 (355 aa).

2 disordered regions span residues 1-60 (MDSK…LPSN) and 296-315 (HSST…KIHM). Residues 7-28 (AKSKRAHTLHHSKKSHSVHKPK) are compositionally biased toward basic residues. Polar residues-rich tracts occupy residues 41 to 53 (QGNQ…QSRR) and 296 to 310 (HSST…NPSD).

In terms of assembly, interacts with RST1. Expressed in taproots, lateral roots, root tips, leaf veins, cauline leaves, inflorescences, flowers, and siliques.

The protein localises to the cytoplasm. It is found in the cytosol. Its subcellular location is the endoplasmic reticulum. Functionally, together with RST1, acts as a cofactor of the cytoplasmic exosome and connects the cytosolic RNA exosome to the SKI complex. Acts as a post-transcriptional gene silencing (PTGS) suppressor. CER16/RIPR can, like RST1 suppress the production of small interfering RNAs (siRNAs) from the CER3 locus, which is involved in cuticule membrane and wax production, and in the typhine and sporopollenin biosynthesis of pollen. The chain is Protein ECERIFERUM 16 from Arabidopsis thaliana (Mouse-ear cress).